The sequence spans 522 residues: Peptide methionine sulfoxide reductase MsrA/MsrB (522 aa).

Residues 17-174 (LALGACSPKI…ALALIRDPNA (158 aa)) form the Thioredoxin domain. The cysteines at positions 68 and 71 are disulfide-linked. Positions 199-354 (RTIYLAGGCF…PNGYCHIDIR (156 aa)) are peptide methionine sulfoxide reductase A. Residue Cys207 is part of the active site. In terms of domain architecture, MsrB spans 383 to 506 (DAELKRTLTE…NGASLKFIPL (124 aa)). An intrachain disulfide couples Cys440 to Cys495. The active-site Nucleophile is the Cys495.

This sequence in the N-terminal section; belongs to the thioredoxin family. The protein in the central section; belongs to the MsrA Met sulfoxide reductase family. It in the C-terminal section; belongs to the MsrB Met sulfoxide reductase family.

The catalysed reaction is L-methionyl-[protein] + [thioredoxin]-disulfide + H2O = L-methionyl-(S)-S-oxide-[protein] + [thioredoxin]-dithiol. It carries out the reaction [thioredoxin]-disulfide + L-methionine + H2O = L-methionine (S)-S-oxide + [thioredoxin]-dithiol. The enzyme catalyses L-methionyl-[protein] + [thioredoxin]-disulfide + H2O = L-methionyl-(R)-S-oxide-[protein] + [thioredoxin]-dithiol. Has an important function as a repair enzyme for proteins that have been inactivated by oxidation. Catalyzes the reversible oxidation-reduction of methionine sulfoxide in proteins to methionine. The sequence is that of Peptide methionine sulfoxide reductase MsrA/MsrB (msrAB) from Neisseria meningitidis serogroup B (strain ATCC BAA-335 / MC58).